The chain runs to 63 residues: DNA-directed RNA polymerase 7 kDa subunit (63 aa).

The protein belongs to the poxviridae DNA-directed RNA polymerase 7 kDa subunit family. The DNA-dependent RNA polymerase (vRNAP) consists of eight subunits encoded by early viral genes and termed according to their apparent molecular masses Rpo147, Rpo132, Rpo35, Rpo30, Rpo22, Rpo19, Rpo18, and Rpo7. The same holoenzyme, with the addition of the transcription-specificity factor RAP94, is used for early gene expression.

It is found in the virion. The catalysed reaction is RNA(n) + a ribonucleoside 5'-triphosphate = RNA(n+1) + diphosphate. Functionally, part of the DNA-dependent RNA polymerase which catalyzes the transcription of viral DNA into RNA using the four ribonucleoside triphosphates as substrates. Responsible for the transcription of early, intermediate and late genes. DNA-dependent RNA polymerase associates with the early transcription factor (ETF), itself composed of OPG118 and OPG134, thereby allowing the early genes transcription. Late transcription, and probably also intermediate transcription, require newly synthesized RNA polymerase. The protein is DNA-directed RNA polymerase 7 kDa subunit (OPG090) of Monkeypox virus.